We begin with the raw amino-acid sequence, 87 residues long: Small ribosomal subunit protein uS17 (87 aa).

This sequence belongs to the universal ribosomal protein uS17 family. As to quaternary structure, part of the 30S ribosomal subunit.

One of the primary rRNA binding proteins, it binds specifically to the 5'-end of 16S ribosomal RNA. The polypeptide is Small ribosomal subunit protein uS17 (Neisseria gonorrhoeae (strain ATCC 700825 / FA 1090)).